The sequence spans 104 residues: UPF0045 protein YqgV (104 aa).

This sequence belongs to the UPF0045 family.

This Bacillus subtilis (strain 168) protein is UPF0045 protein YqgV (yqgV).